The primary structure comprises 1816 residues: MSGASVKVAVRVRPFNSRETSKESKCIIQMQGNSTSIINPKNPKEAPKSFSFDYSYWSHTSPEDPCFASQNRVYNDIGKEMLLHAFEGYNVCIFAYGQTGAGKSYTMMGKQEESQAGIIPQLCEELFEKINDNCNEEMSYSVEVSYMEIYCERVRDLLNPKNKGNLRVREHPLLGPYVEDLSKLAVTSYTDIADLMDAGNKARTVAATNMNETSSRSHAVFTIVFTQKKQDPETNLSTEKVSKISLVDLAGSERADSTGAKGTRLKEGANINKSLTTLGKVISALAEVDNCTSKSKKKKKTDFIPYRDSVLTWLLRENLGGNSRTAMVAALSPADINYDETLSTLRYADRAKQIKCNAVINEDPNAKLVRELKEEVTRLKDLLRAQGLGDIIDIDPLIDDYSGSGGKYLKDFQNNKHRYLLASENQRPGNFSTASMGSLTSSPSSCSLNSQVGLTSVTSIQERIMSTPGGEEAIERLKESEKIIAELNETWEEKLRKTEAIRMEREALLAEMGVAIREDGGTLGVFSPKKTPHLVNLNEDPLMSECLLYYIKDGITRVGQADAERRQDIVLSGAHIKEEHCLFRSERSNTGEVIVTLEPCERSETYVNGKRVAHPVQLRSGNRIIMGKNHVFRFNHPEQARAEREKTPSAETPSEPVDWTFAQRELLEKQGIDMKQEMEKRLQEMEILYKKEKEEADLLLEQQRLDYESKLQALQRQVETRSLAAETTEEEEEEEEVPWTQHEFELAQWAFRKWKSHQFTSLRDLLWGNAVYLKEANAISVELKKKVQFQFVLLTDTLYSPVPPELLPSEMEKTHEDRPFPRTVVAVEVQDLKNGATHYWSLDKLKQRLDLMREMYDRAGEVASSAQDDSETTMTGSDPFYDRFHWFKLVGSSPIFHGCVNERLADRTPSPTFSTADSDITELADEQQDAMEDFDDEAFVDDTGSDAGTEEGSELFSDGHDPFYDRSPWFILVGRAFVYLSNLLYPVPLIHRVAIVSEKGEVRGFLRVAVQAIAADEEAPDYGSGIRQSGTAKISFDNEYFNQSDFSSAAMTRSGLSLEELRIVEGQGQSSEVISPPEEVNRMNDLDLKSGTLLDGKMVMEGFSEEIGNHLKLGSAFTFRVTVLQASGILPEYADIFCQFNFLHRHDEAFSTEPLKNNGRGSPLGFYHVQNIAVEVTESFVDYIKTKPIVFEVFGHYQQHPLHLQGQDLNSPPQPSRRFFPPPMPLSKPVPATKLNTMNKTTLGQSMSKYDLLVWFEISELEPTGEYIPAVVDHTAGLPCQGTFLLHQGIQRRITVTIIHEKGSELHWKDVRELVVGRIRNKPEVDEAAVDAVLSLNIISAKSLKAAHSSSRTFYRFEAVWDSSLHNSLLLNRVTPYGEKIYMTLSAYLELDHCIQPAVITKDVCMVFYSRDAKISPPRSLRNLFGSGYSKSPDSNRVTGIYELSLCKMADTGSPGMQRRRRKVLDTSVAYVRGEENLAGWRPRGDSLILEHQWELEKLELLHEVEKTRHFLLLRERLGDSVPKSLSDSLSPSLSSGTLSTSTSISSQISTTTFESAITPSESSGYDSADVESLVDREKELATKCLQLLTHTFNREFSQVHGSISDCKLSDISPIGRDPSVSSFSSSTLTPSSTCPSLVDSRSSSMDQKTPEANSRASSPCQEFEQFQIVPTVETPYLARAGKNEFLNLVPDIEEVRAGSVVSKKGYLHFKEPLSSNWAKHFVVVRRPYVFIYNSDKDPVERGIINLSTAQVEYSEDQQAMVKTPNTFAVCTKHRGVLLQALNDKDMNDWLYAFNPLLAGTIRSKLSRRCPSQPKY.

At Ser2 the chain carries N-acetylserine. The region spanning 5-354 (SVKVAVRVRP…LRYADRAKQI (350 aa)) is the Kinesin motor domain. ATP is bound at residue 97–104 (GQTGAGKS). An interaction with KIFBP region spans residues 270 to 350 (NINKSLTTLG…TLSTLRYADR (81 aa)). 2 coiled-coil regions span residues 365–386 (NAKL…LRAQ) and 470–502 (GEEA…EAIR). An FHA domain is found at 556-612 (TRVGQADAERRQDIVLSGAHIKEEHCLFRSERSNTGEVIVTLEPCERSETYVNGKRV). Phosphothreonine occurs at positions 647 and 652. Coiled coils occupy residues 668–737 (EKQG…EEEV) and 841–869 (SLDK…AQDD). Residues Ser1054, Ser1057, Ser1416, Ser1454, and Ser1487 each carry the phosphoserine modification. Residues 1522–1571 (VPKSLSDSLSPSLSSGTLSTSTSISSQISTTTFESAITPSESSGYDSADV) form a disordered region. Residues 1525 to 1553 (SLSDSLSPSLSSGTLSTSTSISSQISTTT) are compositionally biased toward low complexity. Residues 1554–1566 (FESAITPSESSGY) are compositionally biased toward polar residues. A phosphoserine mark is found at Ser1573, Ser1603, Ser1610, and Ser1613. Low complexity predominate over residues 1620–1637 (SVSSFSSSTLTPSSTCPS). The tract at residues 1620-1659 (SVSSFSSSTLTPSSTCPSLVDSRSSSMDQKTPEANSRASS) is disordered. The span at 1640 to 1659 (DSRSSSMDQKTPEANSRASS) shows a compositional bias: polar residues. One can recognise a PH domain in the interval 1702–1799 (VSKKGYLHFK…WLYAFNPLLA (98 aa)).

This sequence belongs to the TRAFAC class myosin-kinesin ATPase superfamily. Kinesin family. Unc-104 subfamily. As to quaternary structure, monomer. Interacts with KIFBP; positively regulates KIF1B microtubule motor activity. Interacts (via C-terminus end of the kinesin-motor domain) with CHP1; the interaction occurs in a calcium-dependent manner. Interacts with MADD (via death domain); links this isoform to Rab3-carrying vesicles in anterograde synaptic vesicle transport. As to expression, expressed in the brain (at protein level).

It is found in the cytoplasm. It localises to the cytoskeleton. The protein localises to the cytoplasmic vesicle. The protein resides in the secretory vesicle. Its subcellular location is the synaptic vesicle membrane. It is found in the mitochondrion. It carries out the reaction ATP + H2O + a kinesin associated with a microtubule at position (n) = ADP + phosphate a kinesin associated with a microtubule at position (n+1, toward the plus end).. Has a plus-end-directed microtubule motor activity and functions as a motor for transport of vesicles and organelles along microtubules. In terms of biological role, has a plus-end-directed microtubule motor activity and functions as a motor for anterograde synaptic vesicle transport along axonal microtubules from the cell body to the presynapse in neuronal cells. Functions as a downstream effector in a developmental apoptotic pathway that is activated when nerve growth factor (NGF) becomes limiting for neuronal progenitor cells. Functionally, has a plus-end-directed microtubule motor activity and functions as a motor for anterograde transport of mitochondria. In Mus musculus (Mouse), this protein is Kinesin-like protein KIF1B.